A 309-amino-acid chain; its full sequence is Porphobilinogen deaminase (309 aa).

Cys242 bears the S-(dipyrrolylmethanemethyl)cysteine mark.

It belongs to the HMBS family. In terms of assembly, monomer. Requires dipyrromethane as cofactor.

The catalysed reaction is 4 porphobilinogen + H2O = hydroxymethylbilane + 4 NH4(+). Its pathway is porphyrin-containing compound metabolism; protoporphyrin-IX biosynthesis; coproporphyrinogen-III from 5-aminolevulinate: step 2/4. Its function is as follows. Tetrapolymerization of the monopyrrole PBG into the hydroxymethylbilane pre-uroporphyrinogen in several discrete steps. The sequence is that of Porphobilinogen deaminase from Shewanella woodyi (strain ATCC 51908 / MS32).